A 194-amino-acid polypeptide reads, in one-letter code: Putative manganese efflux pump MntP (194 aa).

Transmembrane regions (helical) follow at residues Phe3 to Cys23, Gly40 to Tyr60, Ile65 to Ile85, Leu109 to Phe129, Ile134 to Leu154, and Ile169 to Leu189.

Belongs to the MntP (TC 9.B.29) family.

The protein resides in the cell inner membrane. Functionally, probably functions as a manganese efflux pump. The polypeptide is Putative manganese efflux pump MntP (Proteus mirabilis (strain HI4320)).